The chain runs to 354 residues: tRNA N6-adenosine threonylcarbamoyltransferase (354 aa).

His-111 and His-115 together coordinate Fe cation. Substrate is bound by residues 134–138 (LVSGG), Asp-167, Gly-180, and Asn-279. Asp-319 provides a ligand contact to Fe cation.

This sequence belongs to the KAE1 / TsaD family. The cofactor is Fe(2+).

It localises to the cytoplasm. The catalysed reaction is L-threonylcarbamoyladenylate + adenosine(37) in tRNA = N(6)-L-threonylcarbamoyladenosine(37) in tRNA + AMP + H(+). Functionally, required for the formation of a threonylcarbamoyl group on adenosine at position 37 (t(6)A37) in tRNAs that read codons beginning with adenine. Is involved in the transfer of the threonylcarbamoyl moiety of threonylcarbamoyl-AMP (TC-AMP) to the N6 group of A37, together with TsaE and TsaB. TsaD likely plays a direct catalytic role in this reaction. The polypeptide is tRNA N6-adenosine threonylcarbamoyltransferase (Neisseria meningitidis serogroup C / serotype 2a (strain ATCC 700532 / DSM 15464 / FAM18)).